The following is a 93-amino-acid chain: Large ribosomal subunit protein uL23cz/uL23cy (93 aa).

Belongs to the universal ribosomal protein uL23 family. Part of the 50S ribosomal subunit.

It localises to the plastid. It is found in the chloroplast. Binds to 23S rRNA. This chain is Large ribosomal subunit protein uL23cz/uL23cy (rpl23-A), found in Oenothera elata subsp. hookeri (Hooker's evening primrose).